A 143-amino-acid polypeptide reads, in one-letter code: Histone H2A.z (143 aa).

This sequence belongs to the histone H2A family. The nucleosome is a histone octamer containing two molecules each of H2A, H2B, H3 and H4 assembled in one H3-H4 heterotetramer and two H2A-H2B heterodimers. The octamer wraps approximately 147 bp of DNA.

It is found in the nucleus. It localises to the chromosome. Core component of nucleosome which plays a central role in DNA double strand break (DSB) repair. Nucleosomes wrap and compact DNA into chromatin, limiting DNA accessibility to the cellular machineries which require DNA as a template. Histones thereby play a central role in transcription regulation, DNA repair, DNA replication and chromosomal stability. DNA accessibility is regulated via a complex set of post-translational modifications of histones, also called histone code, and nucleosome remodeling. The sequence is that of Histone H2A.z (H2AZ) from Dictyostelium discoideum (Social amoeba).